The chain runs to 431 residues: Serine hydroxymethyltransferase 1 (431 aa).

(6S)-5,6,7,8-tetrahydrofolate-binding positions include Leu-127 and 131–133 (GHL). N6-(pyridoxal phosphate)lysine is present on Lys-236. Position 252 (Glu-252) interacts with (6S)-5,6,7,8-tetrahydrofolate.

This sequence belongs to the SHMT family. Homodimer. The cofactor is pyridoxal 5'-phosphate.

The protein localises to the cytoplasm. It carries out the reaction (6R)-5,10-methylene-5,6,7,8-tetrahydrofolate + glycine + H2O = (6S)-5,6,7,8-tetrahydrofolate + L-serine. It participates in one-carbon metabolism; tetrahydrofolate interconversion. Its pathway is amino-acid biosynthesis; glycine biosynthesis; glycine from L-serine: step 1/1. Catalyzes the reversible interconversion of serine and glycine with tetrahydrofolate (THF) serving as the one-carbon carrier. This reaction serves as the major source of one-carbon groups required for the biosynthesis of purines, thymidylate, methionine, and other important biomolecules. Also exhibits THF-independent aldolase activity toward beta-hydroxyamino acids, producing glycine and aldehydes, via a retro-aldol mechanism. The protein is Serine hydroxymethyltransferase 1 of Rhizobium meliloti (strain 1021) (Ensifer meliloti).